Here is a 178-residue protein sequence, read N- to C-terminus: Interleukin-10 (178 aa).

The signal sequence occupies residues 1 to 18; the sequence is MHSSALLCCLVLLTGVRA. 2 disulfide bridges follow: C30–C126 and C80–C132. Residue N134 is glycosylated (N-linked (GlcNAc...) asparagine).

Belongs to the IL-10 family. As to quaternary structure, homodimer. Interacts with IL10RA and IL10RB.

It is found in the secreted. Major immune regulatory cytokine that acts on many cells of the immune system where it has profound anti-inflammatory functions, limiting excessive tissue disruption caused by inflammation. Mechanistically, IL10 binds to its heterotetrameric receptor comprising IL10RA and IL10RB leading to JAK1 and STAT2-mediated phosphorylation of STAT3. In turn, STAT3 translocates to the nucleus where it drives expression of anti-inflammatory mediators. Targets antigen-presenting cells (APCs) such as macrophages and monocytes and inhibits their release of pro-inflammatory cytokines including granulocyte-macrophage colony-stimulating factor /GM-CSF, granulocyte colony-stimulating factor/G-CSF, IL-1 alpha, IL-1 beta, IL-6, IL-8 and TNF-alpha. Also interferes with antigen presentation by reducing the expression of MHC-class II and co-stimulatory molecules, thereby inhibiting their ability to induce T cell activation. In addition, controls the inflammatory response of macrophages by reprogramming essential metabolic pathways including mTOR signaling. The polypeptide is Interleukin-10 (IL10) (Macaca mulatta (Rhesus macaque)).